The following is a 379-amino-acid chain: Putative F-box protein At5g62660 (379 aa).

Residues 35-84 form the F-box domain; sequence ALVAPEIPLDLLIEILTKLPAKSLMRFKCVSKLWSSLIRSRFFSNCYLTV.

The sequence is that of Putative F-box protein At5g62660 from Arabidopsis thaliana (Mouse-ear cress).